The following is a 179-amino-acid chain: Segregation and condensation protein B (179 aa).

It belongs to the ScpB family. Homodimer. Homodimerization may be required to stabilize the binding of ScpA to the Smc head domains. Component of a cohesin-like complex composed of ScpA, ScpB and the Smc homodimer, in which ScpA and ScpB bind to the head domain of Smc. The presence of the three proteins is required for the association of the complex with DNA.

The protein localises to the cytoplasm. Its function is as follows. Participates in chromosomal partition during cell division. May act via the formation of a condensin-like complex containing Smc and ScpA that pull DNA away from mid-cell into both cell halves. This Streptococcus equi subsp. zooepidemicus (strain H70) protein is Segregation and condensation protein B.